The chain runs to 449 residues: Trigger factor (449 aa).

A PPIase FKBP-type domain is found at 174-261; that stretch reads GDIAVVGFKG…LKDLKTRELP (88 aa). Residues 430–449 form a disordered region; it reads ENSTVTEKAPDKDKPSVTDA. Over residues 437-449 the composition is skewed to basic and acidic residues; that stretch reads KAPDKDKPSVTDA.

Belongs to the FKBP-type PPIase family. Tig subfamily.

Its subcellular location is the cytoplasm. The enzyme catalyses [protein]-peptidylproline (omega=180) = [protein]-peptidylproline (omega=0). Functionally, involved in protein export. Acts as a chaperone by maintaining the newly synthesized protein in an open conformation. Functions as a peptidyl-prolyl cis-trans isomerase. This Synechococcus sp. (strain CC9311) protein is Trigger factor.